We begin with the raw amino-acid sequence, 849 residues long: Putative respiratory burst oxidase homolog protein G (849 aa).

Residues 1-17 show a composition bias toward basic and acidic residues; it reads MQRVSFEVKDTEAEKSS. Residues 1 to 53 are disordered; it reads MQRVSFEVKDTEAEKSSSEILSGSLPSTYRNPAMENVGNAVDDGSSVKNNPKL. The Cytoplasmic segment spans residues 1–303; the sequence is MQRVSFEVKD…RFFVLDSWQR (303 aa). Residues 18–27 are compositionally biased toward low complexity; sequence SEILSGSLPS. EF-hand-like regions lie at residues 118-128 and 153-164; these read TANTDGLLLRS and SHLKGDVITETE. 2 consecutive EF-hand domains span residues 176-211 and 220-255; these read SFDS…SSSA and KADE…AETK. Asp189, Asp191, Asp193, Arg195, and Glu200 together coordinate Ca(2+). A Phosphoserine modification is found at Ser270. Residues 304-324 traverse the membrane as a helical segment; that stretch reads VWVIALWLTIMAILFAYKYIQ. Residues 325–392 are Extracellular-facing; the sequence is YKNRAVYEVL…LNFHKVIAVG (68 aa). In terms of domain architecture, Ferric oxidoreductase spans 342 to 502; sequence KGAAETLKLN…LFVIVYILLV (161 aa). The helical transmembrane segment at 393–409 threads the bilayer; the sequence is IAIGVAIHSVSHLACDF. Over 410 to 444 the chain is Cytoplasmic; that stretch reads PLLIAATPAEYMPLGKFFGEEQPKRYLHFVKSTEG. A helical membrane pass occupies residues 445-465; the sequence is ITGLVMVFLMVIAFTLAMPWF. At 466-489 the chain is on the extracellular side; it reads RRGKLEKKLPGPLKKLASFNAFWY. A helical membrane pass occupies residues 490–510; that stretch reads THHLFVIVYILLVLHGYYIYL. Topologically, residues 511–518 are cytoplasmic; it reads NKEWYKKT. Residues 519 to 536 form a helical membrane-spanning segment; sequence TWMYLAVPVALYAYERLI. Residues 537-659 are Extracellular-facing; the sequence is RAFRSSIRTV…PYGAPAQDYK (123 aa). Residues 541 to 657 form the FAD-binding FR-type domain; sequence SSIRTVKVLK…DGPYGAPAQD (117 aa). A helical transmembrane segment spans residues 660–680; it reads KYEVVLLIGLGIGATPMISII. The Cytoplasmic portion of the chain corresponds to 681–849; that stretch reads KDIINNTETK…TRFSFHKENF (169 aa).

Belongs to the RBOH (TC 5.B.1.3) family. As to quaternary structure, monomer and homodimer.

The protein resides in the membrane. Its function is as follows. Calcium-dependent NADPH oxidase that generates superoxide. The chain is Putative respiratory burst oxidase homolog protein G (RBOHG) from Arabidopsis thaliana (Mouse-ear cress).